Consider the following 438-residue polypeptide: Sphingomyelinase phosphodiesterase D (438 aa).

The N-terminal stretch at 1-17 is a signal peptide; sequence MKIILILVLVLVVSINA. The Zn(2+) site is built by Asp-27 and His-29. N-linked (GlcNAc...) asparagine glycosylation is present at Asn-40. Zn(2+) contacts are provided by Asp-111 and Asn-148. N-linked (GlcNAc...) asparagine glycosylation occurs at Asn-160. His-247 serves as a coordination point for Zn(2+). A glycan (N-linked (GlcNAc...) asparagine) is linked at Asn-271. Residues His-287 and His-289 each contribute to the Zn(2+) site. N-linked (GlcNAc...) asparagine glycosylation is found at Asn-338 and Asn-359.

It belongs to the acid sphingomyelinase family. Requires Zn(2+) as cofactor.

It localises to the secreted. The sequence is that of Sphingomyelinase phosphodiesterase D (sgmD) from Dictyostelium discoideum (Social amoeba).